The chain runs to 93 residues: Putative septation protein SpoVG (93 aa).

This sequence belongs to the SpoVG family.

In terms of biological role, could be involved in septation. This Treponema denticola (strain ATCC 35405 / DSM 14222 / CIP 103919 / JCM 8153 / KCTC 15104) protein is Putative septation protein SpoVG.